We begin with the raw amino-acid sequence, 238 residues long: Probable transcriptional regulatory protein SSU98_0387 (238 aa).

Belongs to the TACO1 family. YeeN subfamily.

It localises to the cytoplasm. This is Probable transcriptional regulatory protein SSU98_0387 from Streptococcus suis (strain 98HAH33).